The following is a 499-amino-acid chain: Phenylalanine--tRNA ligase alpha subunit (499 aa).

Residues threonine 330, 372–374, and tyrosine 412 each bind L-phenylalanine; that span reads QVE. Mg(2+) is bound at residue glutamate 414. L-phenylalanine is bound at residue phenylalanine 438.

It belongs to the class-II aminoacyl-tRNA synthetase family. Phe-tRNA synthetase alpha subunit type 2 subfamily. In terms of assembly, tetramer of two alpha and two beta subunits. Mg(2+) is required as a cofactor.

It is found in the cytoplasm. The catalysed reaction is tRNA(Phe) + L-phenylalanine + ATP = L-phenylalanyl-tRNA(Phe) + AMP + diphosphate + H(+). The sequence is that of Phenylalanine--tRNA ligase alpha subunit (frs2) from Schizosaccharomyces pombe (strain 972 / ATCC 24843) (Fission yeast).